The following is a 350-amino-acid chain: F(420)H(2) dehydrogenase subunit H (350 aa).

8 helical membrane passes run 21-41 (GTVGLVLVGAIFLGGMAAVWI), 94-114 (VFMLTSLFLMLVAIPVGAVFI), 128-148 (ISILFIEAVSAINIFGIFMAA), 173-193 (PLGIAIVSVAVMTGSLNIIDI), 200-220 (FVWNIFLQPIGFVVFFIALMA), 261-281 (ILGSFLVALLFLGGWNVPAFV), 288-308 (GLIAPTGILLLKTVLVLMTII), and 330-350 (LLPLSLLNLAWAVGLGLYLGA).

This sequence belongs to the complex I subunit 1 family. In terms of assembly, the FPO complex is composed of at least 13 different subunits. FpoA, FpoH, FpoJ, FpoK, FpoL, FpoM and FpoN proteins constitute the membrane sector of the complex.

It is found in the cell membrane. The enzyme catalyses methanophenazine + reduced coenzyme F420-(gamma-L-Glu)(n) = dihydromethanophenazine + oxidized coenzyme F420-(gamma-L-Glu)(n) + H(+). Component of the F(420)H(2) dehydrogenase (FPO complex) which is part of the energy-conserving F(420)H(2):heterodisulfide oxidoreductase system. The membrane-bound electron transfer system of the complex plays an important role in the metabolism of methylotrophic methanogens when the organisms grow on methanol or methylamines. Catalyzes the oxidation of methanophenazine to dihydromethanophenazine. It shuttles electrons from F(420)H(2), via FAD and iron-sulfur (Fe-S) centers, to methanophenazine (an electron carrier in the membrane). It couples the redox reaction to proton translocation (for every two electrons transferred, two hydrogen ions are translocated across the cytoplasmic membrane), and thus conserves the redox energy in a proton gradient. It also catalyzes the oxidation of F(420)H(2) with quinones such as 2,3-dimethyl-1,4-naphthoquinone, 2-methyl-1,4-naphthoquinone and tetramethyl-p-benzoquinone. This chain is F(420)H(2) dehydrogenase subunit H, found in Methanosarcina mazei (strain ATCC BAA-159 / DSM 3647 / Goe1 / Go1 / JCM 11833 / OCM 88) (Methanosarcina frisia).